Here is a 513-residue protein sequence, read N- to C-terminus: 2,3-bisphosphoglycerate-independent phosphoglycerate mutase (513 aa).

2 residues coordinate Mn(2+): Asp13 and Ser63. Catalysis depends on Ser63, which acts as the Phosphoserine intermediate. Residues His124, 154 to 155 (RD), Arg186, Arg192, 262 to 265 (RADR), and Lys335 each bind substrate. Mn(2+) is bound by residues Asp402, His406, Asp443, His444, and His462.

This sequence belongs to the BPG-independent phosphoglycerate mutase family. As to quaternary structure, monomer. Requires Mn(2+) as cofactor.

The catalysed reaction is (2R)-2-phosphoglycerate = (2R)-3-phosphoglycerate. It participates in carbohydrate degradation; glycolysis; pyruvate from D-glyceraldehyde 3-phosphate: step 3/5. Catalyzes the interconversion of 2-phosphoglycerate and 3-phosphoglycerate. The chain is 2,3-bisphosphoglycerate-independent phosphoglycerate mutase from Photobacterium profundum (strain SS9).